Reading from the N-terminus, the 148-residue chain is 15 kDa excretory/secretory protein (148 aa).

A signal peptide spans 1-19 (MFFAFAVLLIALATREAYG).

To T.colubriformis 30 kDa antigenic glycoprotein.

The protein localises to the secreted. The sequence is that of 15 kDa excretory/secretory protein from Haemonchus contortus (Barber pole worm).